A 77-amino-acid polypeptide reads, in one-letter code: EMBRYO SURROUNDING FACTOR 1-like protein 9 (77 aa).

Residues 1-22 (MSSSRFLILCIILISFFPLHEC) form the signal peptide. Intrachain disulfides connect cysteine 38-cysteine 54, cysteine 43-cysteine 75, cysteine 52-cysteine 71, and cysteine 55-cysteine 64.

The protein belongs to the MEG family. As to expression, expressed in flowers.

The sequence is that of EMBRYO SURROUNDING FACTOR 1-like protein 9 (ESFL9) from Arabidopsis thaliana (Mouse-ear cress).